The primary structure comprises 430 residues: MSLFTPLSETNVRSHTNTSSVFCRRIKTLVAGLTALGLMLAAVSASAGFYVSGKQLREGNGNNFIMRGVNLPHAWFPDRTNQALADISATGANSVRVVLSNGRLWSRTPESQVASIISQAKARQLITVLEVHDTTGYGEQTAATLSEAVDYWIAIRNALIGQEDYVIINIGNEPFGNGQSASTWLNLHRDAINRLRNAGFTHTLMVDAANWGQDWENIMRNNASSLFNSDPRRNVIFSVHMYEVYPNDTAVNNYMSAFNSMNLPLVVGEFAANHFGSYVDAGSIMARAQQYGFGYLGWSWSGNSSNLSALDVVTNFNAGSLTTWGNLLINNTNGIRNTSRKATIFGGSGSSSSSAGSCGTAPNGYPYCCNASSATGNGWGWENNRSCVVATTSTSCNWYGTSYPICVNTSSGWGWENNRSCIAASTCAAQ.

The Proton donor role is filled by Glu-173. Residue Glu-269 is the Nucleophile of the active site. 2 consecutive CBM10 domains span residues 357 to 390 and 395 to 424; these read SCGTAPNGYPYCCNASSATGNGWGWENNRSCVVA and SCNWYGTSYPICVNTSSGWGWENNRSCIAA.

It belongs to the glycosyl hydrolase 5 (cellulase A) family.

It catalyses the reaction Random hydrolysis of (1-&gt;4)-beta-D-mannosidic linkages in mannans, galactomannans and glucomannans.. In terms of biological role, catalyzes the endo hydrolysis of beta-1,4-linked mannan, galactomannan and glucomannan. It is able to hydrolyze mannosidic linkages that are flanked by mannose or glucose. This Cellvibrio japonicus (strain Ueda107) (Pseudomonas fluorescens subsp. cellulosa) protein is Mannan endo-1,4-beta-mannosidase.